We begin with the raw amino-acid sequence, 386 residues long: MKIHEYQGKELLKQFGVTVPRGIPAFSVDEAVAAAEKLGGPVWVVKAQIHAGGRGKGGGVKLGRSIDEVRQLSSEILGMQLVTHQTGPQGQKVRRLLIEEGADIKKEYYVGIVTDRGTQRVCVMASSEGGMDIEEVAAHSPEKILKVFVDPAAGLTDAEAAELARGIGVPEASVGKAAAEFQKLYKAYWDTDASLAEINPLILTGSGDIIALDAKFNFDSNALFRHPEIVAYRDLDEEDPAEIEASKFDLAYIQLDGNIGCLVNGAGLAMATMDTIKLFGGEPANFLDVGGGATAEKVTEAFKIMLKNKSVKAILVNIFGGIMRCDVIAEGVITACKAVNLNVPLVVRMKGTNEELGKKMLAESGLPIISADTMAEAATKVVAAVK.

One can recognise an ATP-grasp domain in the interval 9 to 244; the sequence is KELLKQFGVT…LDEEDPAEIE (236 aa). Residues Lys46, 53-55, Glu99, Ala102, and Glu107 each bind ATP; that span reads GRG. Residues Asn199 and Asp213 each coordinate Mg(2+). Substrate is bound by residues Asn264 and 321-323; that span reads GIM.

It belongs to the succinate/malate CoA ligase beta subunit family. As to quaternary structure, heterotetramer of two alpha and two beta subunits. Mg(2+) serves as cofactor.

The catalysed reaction is succinate + ATP + CoA = succinyl-CoA + ADP + phosphate. The enzyme catalyses GTP + succinate + CoA = succinyl-CoA + GDP + phosphate. The protein operates within carbohydrate metabolism; tricarboxylic acid cycle; succinate from succinyl-CoA (ligase route): step 1/1. Its function is as follows. Succinyl-CoA synthetase functions in the citric acid cycle (TCA), coupling the hydrolysis of succinyl-CoA to the synthesis of either ATP or GTP and thus represents the only step of substrate-level phosphorylation in the TCA. The beta subunit provides nucleotide specificity of the enzyme and binds the substrate succinate, while the binding sites for coenzyme A and phosphate are found in the alpha subunit. The chain is Succinate--CoA ligase [ADP-forming] subunit beta from Bordetella pertussis (strain Tohama I / ATCC BAA-589 / NCTC 13251).